Consider the following 122-residue polypeptide: Holo-[acyl-carrier-protein] synthase (122 aa).

Mg(2+) is bound by residues aspartate 8 and glutamate 56.

This sequence belongs to the P-Pant transferase superfamily. AcpS family. Mg(2+) serves as cofactor.

It localises to the cytoplasm. It carries out the reaction apo-[ACP] + CoA = holo-[ACP] + adenosine 3',5'-bisphosphate + H(+). In terms of biological role, transfers the 4'-phosphopantetheine moiety from coenzyme A to a Ser of acyl-carrier-protein. The chain is Holo-[acyl-carrier-protein] synthase from Salinispora arenicola (strain CNS-205).